The chain runs to 204 residues: Recombination protein RecR (204 aa).

A C4-type zinc finger spans residues 63–78; that stretch reads CRICFNVADSELCPIC. Positions 86–181 constitute a Toprim domain; sequence NKICVVEQPQ…KVTRLARGLP (96 aa).

Belongs to the RecR family.

May play a role in DNA repair. It seems to be involved in an RecBC-independent recombinational process of DNA repair. It may act with RecF and RecO. The sequence is that of Recombination protein RecR from Dehalococcoides mccartyi (strain ATCC BAA-2266 / KCTC 15142 / 195) (Dehalococcoides ethenogenes (strain 195)).